The primary structure comprises 667 residues: Sterile alpha motif domain-containing protein 15 (667 aa).

The segment covering 1-18 (MAEVPEDYDSGPDEDGEP) has biased composition (acidic residues). Disordered stretches follow at residues 1–108 (MAEV…KSER) and 147–424 (SAME…IKSK). 4 stretches are compositionally biased toward basic and acidic residues: residues 19 to 53 (ESER…HEPQ), 84 to 93 (IAKESKRDVP), 187 to 196 (ESLRVQHEET), and 228 to 266 (TKPD…KSSE). The segment covering 268-277 (AGLEPPEETQ) has biased composition (acidic residues). 4 stretches are compositionally biased toward basic and acidic residues: residues 284 to 314 (MQRK…KSTD), 322 to 338 (EEIK…KPNE), 346 to 364 (EMMK…EEKN), and 381 to 422 (PRVE…EPIK). In terms of domain architecture, SAM spans 538 to 601 (WDPEKVAEWI…SRHTRELLEI (64 aa)).

This is Sterile alpha motif domain-containing protein 15 (SAMD15) from Macaca fascicularis (Crab-eating macaque).